We begin with the raw amino-acid sequence, 723 residues long: Malonamoyl-CoA synthetase vrtB (723 aa).

The protein belongs to the ATP-dependent AMP-binding enzyme family.

It functions in the pathway secondary metabolite biosynthesis; terpenoid biosynthesis. Malonamoyl-CoA synthetase; part of the gene cluster that mediates the biosynthesis of viridicatumtoxin, a tetracycline-like fungal meroterpenoid with a unique, fused spirobicyclic ring system. The first step of the pathway is the production of the malonamoyl-CoA starter unit for the polyketide synthase vrtA. The aldolase vrtJ may be involved in the synthesis of the malonamate substrate for malonamoyl-CoA synthetase vrtB. The polyketide synthase vrtA then may utilize the malonamoyl-CoA starter unit, followed by sequential condensation of eight malonyl-CoA units to form the polyketide backbone. The cyclization of the last ring could be mediated by the lactamase-like protein vrtG. The proposed post-PKS tailoring steps are a hydroxylation at C5 catalyzed the cytochrome P450 monooxygenase vrtE, a hydroxylation at C12a catalyzed by VrtH and/or VrtI, and an O-methylation by the O-methyltransferase vrtF. VrtC is then proposed to catalyze the transfer of a geranyl group synthesized by vrtD to the aromatic C ring of the tetracyclic polyketide intermediate of viridicatumtoxin to yield previridicatumtoxin. Finally, the cytochrome P450 monooxygenase vrtK catalyzes the spirocyclization of the geranyl moiety of previridicatumtoxin to afford viridicatumtoxin. The protein is Malonamoyl-CoA synthetase vrtB of Penicillium aethiopicum.